We begin with the raw amino-acid sequence, 156 residues long: Putative pre-16S rRNA nuclease (156 aa).

It belongs to the YqgF nuclease family.

It localises to the cytoplasm. Functionally, could be a nuclease involved in processing of the 5'-end of pre-16S rRNA. The sequence is that of Putative pre-16S rRNA nuclease from Nocardioides sp. (strain ATCC BAA-499 / JS614).